The chain runs to 323 residues: L-lactate dehydrogenase (323 aa).

NAD(+)-binding positions include valine 18, aspartate 39, arginine 44, tyrosine 69, and 83–84 (GA). Substrate contacts are provided by glutamine 86 and arginine 92. NAD(+)-binding positions include threonine 105, 122-124 (AAN), and serine 147. 124–127 (NPVD) provides a ligand contact to substrate. 152–155 (DTAR) is a substrate binding site. Histidine 179 functions as the Proton acceptor in the catalytic mechanism. Tyrosine 223 is subject to Phosphotyrosine. Threonine 232 serves as a coordination point for substrate.

It belongs to the LDH/MDH superfamily. LDH family. Homotetramer.

It localises to the cytoplasm. It catalyses the reaction (S)-lactate + NAD(+) = pyruvate + NADH + H(+). It participates in fermentation; pyruvate fermentation to lactate; (S)-lactate from pyruvate: step 1/1. Catalyzes the conversion of lactate to pyruvate. The sequence is that of L-lactate dehydrogenase from Pediococcus acidilactici.